A 140-amino-acid polypeptide reads, in one-letter code: Large ribosomal subunit protein uL11 (140 aa).

The protein belongs to the universal ribosomal protein uL11 family. As to quaternary structure, part of the ribosomal stalk of the 50S ribosomal subunit. Interacts with L10 and the large rRNA to form the base of the stalk. L10 forms an elongated spine to which L12 dimers bind in a sequential fashion forming a multimeric L10(L12)X complex. Post-translationally, one or more lysine residues are methylated.

Its function is as follows. Forms part of the ribosomal stalk which helps the ribosome interact with GTP-bound translation factors. The sequence is that of Large ribosomal subunit protein uL11 from Enterococcus faecalis (strain ATCC 700802 / V583).